The primary structure comprises 391 residues: Small ribosomal subunit protein bS1 (391 aa).

4 consecutive S1 motif domains span residues 16–90, 108–173, 194–262, and 279–348; these read GDKV…LSRR, NEII…LSRK, GDVI…LSIK, and NDVI…LSIK.

Belongs to the bacterial ribosomal protein bS1 family.

Functionally, binds mRNA; thus facilitating recognition of the initiation point. It is needed to translate mRNA with a short Shine-Dalgarno (SD) purine-rich sequence. The protein is Small ribosomal subunit protein bS1 (rpsA) of Staphylococcus aureus (strain N315).